A 566-amino-acid polypeptide reads, in one-letter code: Protein downstream neighbor of Son (566 aa).

Residues 1–110 (MALSVPGYSP…QPEAPVPFLD (110 aa)) are disordered. A phosphoserine mark is found at Ser-28 and Ser-34. Gly residues predominate over residues 62-72 (GGRGGGSGGGP). A compositionally biased stretch (low complexity) spans 73–82 (AAARRNPFAR).

This sequence belongs to the DONSON family. Component of the replisome complex composed of at least DONSON, MCM2, MCM7, PCNA and TICRR; interaction at least with PCNA occurs during DNA replication. Expressed in the brain, with higher levels in prenatal compared to adult brain.

Its subcellular location is the nucleus. Functionally, replisome component that maintains genome stability by protecting stalled or damaged replication forks. After the induction of replication stress, required for the stabilization of stalled replication forks, the efficient activation of the intra-S-phase and G/2M cell-cycle checkpoints and the maintenance of genome stability. This Homo sapiens (Human) protein is Protein downstream neighbor of Son (DONSON).